The chain runs to 282 residues: Deoxyribonuclease-1 (282 aa).

The first 22 residues, M1 to S22, serve as a signal peptide directing secretion. An N-linked (GlcNAc...) asparagine glycan is attached at N40. The active site involves E100. Residues C123 and C126 are joined by a disulfide bond. N128 carries N-linked (GlcNAc...) asparagine glycosylation. H156 is a catalytic residue. A disulfide bond links C195 and C231.

The protein belongs to the DNase I family. The cofactor is Ca(2+). Mg(2+) serves as cofactor. As to expression, principally in tissues of the digestive system. Highest levels found in urine, but also relatively abundant in semen and saliva.

The protein localises to the secreted. It localises to the zymogen granule. Its subcellular location is the nucleus envelope. The enzyme catalyses Endonucleolytic cleavage to 5'-phosphodinucleotide and 5'-phosphooligonucleotide end-products.. Functionally, serum endocuclease secreted into body fluids by a wide variety of exocrine and endocrine organs. Expressed by non-hematopoietic tissues and preferentially cleaves protein-free DNA. Among other functions, seems to be involved in cell death by apoptosis. Binds specifically to G-actin and blocks actin polymerization. Together with DNASE1L3, plays a key role in degrading neutrophil extracellular traps (NETs). NETs are mainly composed of DNA fibers and are released by neutrophils to bind pathogens during inflammation. Degradation of intravascular NETs by DNASE1 and DNASE1L3 is required to prevent formation of clots that obstruct blood vessels and cause organ damage following inflammation. This Homo sapiens (Human) protein is Deoxyribonuclease-1.